Here is a 135-residue protein sequence, read N- to C-terminus: Germinal center-associated signaling and motility-like protein (135 aa).

The disordered stretch occupies residues Met1 to Cys68. The span at Gly22–Gln48 shows a compositional bias: basic and acidic residues. Residues Glu26–Val50 are a coiled coil. Over residues Ser51–Glu66 the composition is skewed to low complexity.

The sequence is that of Germinal center-associated signaling and motility-like protein (GCSAML) from Homo sapiens (Human).